A 256-amino-acid chain; its full sequence is Ribosomal RNA large subunit methyltransferase E (256 aa).

Residues G48, W50, D68, D86, and D111 each contribute to the S-adenosyl-L-methionine site. The active-site Proton acceptor is the K151. One can recognise a TRAM domain in the interval 198–256; that stretch reads PVSPGDELDATVVDIGSEGDGIIKIDGYTLFVPGVENGDSVRVRVTDLKSNVGFAEVIE.

This sequence belongs to the class I-like SAM-binding methyltransferase superfamily. RNA methyltransferase RlmE family.

The protein resides in the cytoplasm. The catalysed reaction is uridine(2552) in 23S rRNA + S-adenosyl-L-methionine = 2'-O-methyluridine(2552) in 23S rRNA + S-adenosyl-L-homocysteine + H(+). Specifically methylates the uridine in position 2552 of 23S rRNA at the 2'-O position of the ribose in the fully assembled 50S ribosomal subunit. This chain is Ribosomal RNA large subunit methyltransferase E, found in Haloquadratum walsbyi (strain DSM 16790 / HBSQ001).